The chain runs to 196 residues: Nucleoside triphosphate pyrophosphatase (196 aa).

Residue Asp72 is the Proton acceptor of the active site.

This sequence belongs to the Maf family. The cofactor is a divalent metal cation.

The protein localises to the cytoplasm. The catalysed reaction is a ribonucleoside 5'-triphosphate + H2O = a ribonucleoside 5'-phosphate + diphosphate + H(+). It carries out the reaction a 2'-deoxyribonucleoside 5'-triphosphate + H2O = a 2'-deoxyribonucleoside 5'-phosphate + diphosphate + H(+). Functionally, nucleoside triphosphate pyrophosphatase. May have a dual role in cell division arrest and in preventing the incorporation of modified nucleotides into cellular nucleic acids. The chain is Nucleoside triphosphate pyrophosphatase from Chlamydia muridarum (strain MoPn / Nigg).